A 215-amino-acid chain; its full sequence is Glycerol-3-phosphate acyltransferase (215 aa).

The next 5 membrane-spanning stretches (helical) occupy residues 1 to 21, 57 to 77, 85 to 105, 126 to 146, and 165 to 185; these read MAFL…SIPT, IFVL…VKLW, MIPL…AVLG, VLLV…LAML, and VLMF…IVGL.

The protein belongs to the PlsY family. In terms of assembly, probably interacts with PlsX.

The protein localises to the cell inner membrane. It carries out the reaction an acyl phosphate + sn-glycerol 3-phosphate = a 1-acyl-sn-glycero-3-phosphate + phosphate. Its pathway is lipid metabolism; phospholipid metabolism. Its function is as follows. Catalyzes the transfer of an acyl group from acyl-phosphate (acyl-PO(4)) to glycerol-3-phosphate (G3P) to form lysophosphatidic acid (LPA). This enzyme utilizes acyl-phosphate as fatty acyl donor, but not acyl-CoA or acyl-ACP. This Crocosphaera subtropica (strain ATCC 51142 / BH68) (Cyanothece sp. (strain ATCC 51142)) protein is Glycerol-3-phosphate acyltransferase.